The following is a 291-amino-acid chain: RPE-retinal G protein-coupled receptor (291 aa).

At 1 to 15 the chain is on the extracellular side; the sequence is MAETSALPTGFGELE. The chain crosses the membrane as a helical span at residues 16 to 36; sequence VLAVGMVLLVEALSGLSLNTL. Over 37–52 the chain is Cytoplasmic; the sequence is TIFSFCKTPELRTPCH. The chain crosses the membrane as a helical span at residues 53 to 73; it reads LLVLSLALADSGISLNALVAA. At 74-91 the chain is on the extracellular side; that stretch reads TSSLLRRWPYGSDGCQAH. The cysteines at positions 88 and 162 are disulfide-linked. Residues 92-112 form a helical membrane-spanning segment; it reads GFQGFVTALASICSSAAIAWG. Over 113–130 the chain is Cytoplasmic; that stretch reads RYHHYCTRSQLAWNSAVS. The chain crosses the membrane as a helical span at residues 131 to 151; sequence LVLFVWLSSAFWAALPLLGWG. The Extracellular portion of the chain corresponds to 152–175; sequence HYDYEPLGTCCTLDYSKGDRNFTS. Asn172 carries N-linked (GlcNAc...) asparagine glycosylation. A helical membrane pass occupies residues 176-196; the sequence is FLFTMSFFNFAMPLFITITSY. At 197–219 the chain is on the cytoplasmic side; sequence SLMEQKLGKSGHLQVNTTLPART. The chain crosses the membrane as a helical span at residues 220-240; sequence LLLGWGPYAILYLYAVIADVT. At 241–247 the chain is on the extracellular side; the sequence is SISPKLQ. The helical transmembrane segment at 248–268 threads the bilayer; it reads MVPALIAKMVPTINAINYALG. Position 255 is an N6-(retinylidene)lysine (Lys255). The Cytoplasmic segment spans residues 269–291; that stretch reads NEMVCRGIWQCLSPQKREKDRTK.

The protein belongs to the G-protein coupled receptor 1 family. Opsin subfamily. In terms of processing, covalently binds all-trans- and 11-cis-retinal. In terms of tissue distribution, preferentially expressed at high levels in the retinal pigment epithelium (RPE) and Mueller cells of the neural retina.

The protein localises to the membrane. In terms of biological role, receptor for all-trans- and 11-cis-retinal. Binds preferentially to the former and may catalyze the isomerization of the chromophore by a retinochrome-like mechanism. The sequence is that of RPE-retinal G protein-coupled receptor (RGR) from Homo sapiens (Human).